Consider the following 688-residue polypeptide: Protein adenylyltransferase SelO, mitochondrial (688 aa).

Residues 1 to 23 (MGEKRTIIKALKNSAASHFIKKL) constitute a mitochondrion transit peptide. Residues glycine 132, glycine 134, arginine 135, lysine 156, aspartate 168, glycine 169, arginine 220, and arginine 227 each contribute to the ATP site. The active-site Proton acceptor is aspartate 338. Asparagine 339 and aspartate 348 together coordinate Mg(2+). Residue aspartate 348 participates in ATP binding.

The protein belongs to the SELO family. Mg(2+) serves as cofactor. Forms probably one or more intrachain disulfide bridges.

The protein localises to the mitochondrion. The catalysed reaction is L-tyrosyl-[protein] + ATP = O-(5'-adenylyl)-L-tyrosyl-[protein] + diphosphate. Catalyzes the transfer of adenosine 5'-monophosphate (AMP) to Tyr residues of target mitochondrial proteins (AMPylation). Involved in redox homeostasis by regulating the cellular response to oxidative stress. Regulates protein S-glutathionylation levels possibly by AMPylation of deglutathionylation enzymes such as glutaredoxins. The polypeptide is Protein adenylyltransferase SelO, mitochondrial (Saccharomyces cerevisiae (strain ATCC 204508 / S288c) (Baker's yeast)).